The chain runs to 334 residues: Tryptophan--tRNA ligase (334 aa).

Residues 11 to 13 and 19 to 20 contribute to the ATP site; these read QPS and GN. The 'HIGH' region motif lies at 12–20; it reads PSGELTIGN. Asp135 lines the L-tryptophan pocket. ATP-binding positions include 147 to 149, Val186, and 195 to 199; these read GED and KMSKS. A 'KMSKS' region motif is present at residues 195 to 199; that stretch reads KMSKS.

It belongs to the class-I aminoacyl-tRNA synthetase family. As to quaternary structure, homodimer.

The protein resides in the cytoplasm. It carries out the reaction tRNA(Trp) + L-tryptophan + ATP = L-tryptophyl-tRNA(Trp) + AMP + diphosphate + H(+). Its function is as follows. Catalyzes the attachment of tryptophan to tRNA(Trp). This chain is Tryptophan--tRNA ligase, found in Salmonella typhi.